A 92-amino-acid chain; its full sequence is MKTELEQEKELLMMKGDALRMKLYAQSKPKQVTPHFTFADSLSMIASSLNQPVVRSLAVSLLSKKLLSSKFLTYSALGMIALYLLNRNNSTE.

This is an uncharacterized protein from Pasteurella multocida (strain Pm70).